The sequence spans 189 residues: Phomopsin biosynthesis cluster protein D (189 aa).

Belongs to the oryJ family.

Its function is as follows. Part of the gene cluster that mediates the biosynthesis of the phomopsins, a group of hexapeptide mycotoxins which infects lupins and causes lupinosis disease in livestock. The role of phomC within the phomopsins biosynthesis pathway has still to be determined. The pathway starts with the processing of the precursor phomA by several endopeptidases including kexin proteases as well as the cluster-specific S41 family peptidase phomP1 and the oligopeptidase phomG to produce 10 identical copies of the hexapeptide Tyr-Val-Ile-Pro-Ile-Asp. After being excised from the precursor peptide, the core peptides are cyclized and modified post-translationally by enzymes encoded within the gene cluster. The timing and order of proteolysis of the phomA precursor and PTMs are still unknown. Two tyrosinase-like enzymes, phomQ1 and phomQ2, catalyze the chlorination and hydroxylation of Tyr, respectively. PhomYb, is proposed to be involved in the construction of the macrocyclic structure. The other 4 ustYa family proteins may be involved in PTMs that generate the unique structure of phomopsin A. PhomYa is required for the hydroxylation of C-beta of Tyr. PhomYc, phomYd, and phomYe are responsible for the biosynthesis of 2,3-dehydroisoleucine (dIle), 2,3-dehydroaspartic acid (dAsp), and 3,4-dehydroproline (dPro), respectively. While dIle formation by phomYc is indispensable for the installation of dAsp by phomYd, the order of the other PTMs have not been elucidated yet. Most of the biosynthetic enzymes likely have broad substrate specificity, and thus, there might be a metabolic grid from a precursor to phomopsin A. The enzyme(s) responsible for the biosynthesis of 3,4-dehydrovaline (dVal) have also not been identified yet. Finally, phomM acts as an S-adenosylmethionine-dependent alpha-N-methyltransferase that catalyzes two successive N-methylation reactions, converting N-desmethyl-phomopsin A to phomopsin A and phomopsin A further to an N,N-dimethylated congener called phomopsin E. In Diaporthe leptostromiformis (Lupinosis disease fungus), this protein is Phomopsin biosynthesis cluster protein D.